The sequence spans 642 residues: 1-deoxy-D-xylulose-5-phosphate synthase 2 (642 aa).

Thiamine diphosphate-binding positions include His-73 and 113–115 (SHA). A Mg(2+)-binding site is contributed by Asp-144. Residues 145 to 146 (GA), Asn-174, Tyr-285, and Glu-366 each bind thiamine diphosphate. Asn-174 contacts Mg(2+).

This sequence belongs to the transketolase family. DXPS subfamily. Homodimer. It depends on Mg(2+) as a cofactor. Requires thiamine diphosphate as cofactor.

The enzyme catalyses D-glyceraldehyde 3-phosphate + pyruvate + H(+) = 1-deoxy-D-xylulose 5-phosphate + CO2. The protein operates within metabolic intermediate biosynthesis; 1-deoxy-D-xylulose 5-phosphate biosynthesis; 1-deoxy-D-xylulose 5-phosphate from D-glyceraldehyde 3-phosphate and pyruvate: step 1/1. Its function is as follows. Catalyzes the acyloin condensation reaction between C atoms 2 and 3 of pyruvate and glyceraldehyde 3-phosphate to yield 1-deoxy-D-xylulose-5-phosphate (DXP). This Streptomyces coelicolor (strain ATCC BAA-471 / A3(2) / M145) protein is 1-deoxy-D-xylulose-5-phosphate synthase 2.